The sequence spans 354 residues: Transcription factor ATOH1 (354 aa).

Positions 1–21 (MSRLLHAEEWAEVKELGDHHR) are enriched in basic and acidic residues. Disordered regions lie at residues 1-55 (MSRL…ELSL) and 91-122 (EAAAPRDEVDGRGELVRRSSGGASSSKSPGPV). The span at 26-38 (HHLPQPPPPPQPP) shows a compositional bias: pro residues. The span at 94–107 (APRDEVDGRGELVR) shows a compositional bias: basic and acidic residues. Residues 108-122 (RSSGGASSSKSPGPV) show a composition bias toward low complexity. The bHLH domain maps to 159 to 211 (QRRLAANARERRRMHGLNHAFDQLRNVIPSFNNDKKLSKYETLQMAQIYINAL). Disordered regions lie at residues 216-277 (QTPS…TRFS) and 312-354 (SPSL…DEAS). The segment covering 250 to 264 (NATAAGAQQASGGSQ) has biased composition (low complexity). Over residues 335–354 (HRSDGEFSPHSHYSDSDEAS) the composition is skewed to basic and acidic residues.

In terms of assembly, efficient DNA binding requires dimerization with another bHLH protein.

It localises to the nucleus. In terms of biological role, transcriptional regulator. Activates E box-dependent transcription in collaboration with TCF3/E47, but the activity is completely antagonized by the negative regulator of neurogenesis HES1. Plays a role in the differentiation of subsets of neural cells by activating E box-dependent transcription. This Homo sapiens (Human) protein is Transcription factor ATOH1.